Reading from the N-terminus, the 554-residue chain is DnaJ homolog subfamily C member 1 (554 aa).

A signal peptide spans 1–47; that stretch reads MTAPCSQPAQLPGRRQLGLVPFPPPPPRTPLLWLLLLLLAAVAPARG. At 48–153 the chain is on the lumenal side; sequence WESGDLELFD…RRVRKMSNAE (106 aa). The 65-residue stretch at 65 to 129 folds into the J domain; sequence NFYQFLGVQQ…ERRQRYDDIL (65 aa). Residues 154–174 traverse the membrane as a helical segment; that stretch reads LALLLFIILTVGHYAVVWSIY. The Cytoplasmic segment spans residues 175–554; the sequence is LEKQLDELLS…LVQKKKQAKS (380 aa). The SANT 1 domain maps to 325–379; it reads KQAPEWTEEDLSQLTRSMVKFPGGTPGRWEKIAHELGRSVTDVTTKAKQLKDSVT. S381 carries the phosphoserine modification. Over residues 392 to 405 the composition is skewed to polar residues; that stretch reads STVQNSRPIKTATT. The segment at 392 to 500 is disordered; the sequence is STVQNSRPIK…RSAEEPWTQN (109 aa). The span at 421 to 432 shows a compositional bias: acidic residues; it reads AAEEEQEGDSGE. S430 is modified (phosphoserine). Over residues 455–472 the composition is skewed to basic and acidic residues; the sequence is AKPEPEEKSRAKRQKDFD. Residues 473-482 show a composition bias toward acidic residues; it reads IAEQNESSDE. Residues S479, S480, S484, and S492 each carry the phosphoserine modification. Positions 483–494 are enriched in basic and acidic residues; it reads ESLRKERARSAE. Residues 492 to 547 enclose the SANT 2 domain; it reads SAEEPWTQNQQKLLELALQQYPRGSSDRWDKIARCVPSKSKEDCIARYKLLVELVQ.

As to quaternary structure, interacts (via J domain) with HSPA5. Interacts (via cytosolic domain) with ribosomes. Interacts (via SANT 2 domain) with SERPINA3; the interaction delays the formation of the covalent inhibitory complex SERPINA3-chymotrypsin, but does not alter the catalytic activity of SERPINA3. Interacts (via SANT 2 domain) with ITIH4 (via C-terminus); the interaction protects ITIH4 against in vitro cleavage by kallikrein.

It localises to the endoplasmic reticulum membrane. Its subcellular location is the nucleus membrane. It is found in the microsome membrane. Its function is as follows. May modulate protein synthesis. In Homo sapiens (Human), this protein is DnaJ homolog subfamily C member 1 (DNAJC1).